We begin with the raw amino-acid sequence, 168 residues long: Transcriptional repressor NrdR (168 aa).

Residues 3–34 fold into a zinc finger; the sequence is CPFCQDAENKVIDSRESHEGSVIRRRRECLTC. The 91-residue stretch at 49 to 139 folds into the ATP-cone domain; the sequence is PLIVKKDGRR…VYRSFRDIAE (91 aa).

The protein belongs to the NrdR family. Zn(2+) serves as cofactor.

Negatively regulates transcription of bacterial ribonucleotide reductase nrd genes and operons by binding to NrdR-boxes. The polypeptide is Transcriptional repressor NrdR (Myxococcus xanthus (strain DK1622)).